Here is a 249-residue protein sequence, read N- to C-terminus: 5'-nucleotidase SurE (249 aa).

Asp-9, Asp-10, Ser-40, and Asn-92 together coordinate a divalent metal cation.

Belongs to the SurE nucleotidase family. The cofactor is a divalent metal cation.

The protein resides in the cytoplasm. It carries out the reaction a ribonucleoside 5'-phosphate + H2O = a ribonucleoside + phosphate. Nucleotidase that shows phosphatase activity on nucleoside 5'-monophosphates. This is 5'-nucleotidase SurE from Shewanella oneidensis (strain ATCC 700550 / JCM 31522 / CIP 106686 / LMG 19005 / NCIMB 14063 / MR-1).